The primary structure comprises 160 residues: Cytochrome b6-f complex subunit 4 (160 aa).

The next 3 membrane-spanning stretches (helical) occupy residues 36-56, 95-115, and 131-151; these read LLYIFPVVILGTIACNVGLAV, LLGVLLMVSVPTGLLTVPFLE, and TVFLFGTALSLWLGIGATLPI.

The protein belongs to the cytochrome b family. PetD subfamily. As to quaternary structure, the 4 large subunits of the cytochrome b6-f complex are cytochrome b6, subunit IV (17 kDa polypeptide, petD), cytochrome f and the Rieske protein, while the 4 small subunits are petG, petL, petM and petN. The complex functions as a dimer.

The protein localises to the plastid. It is found in the chloroplast thylakoid membrane. Component of the cytochrome b6-f complex, which mediates electron transfer between photosystem II (PSII) and photosystem I (PSI), cyclic electron flow around PSI, and state transitions. The chain is Cytochrome b6-f complex subunit 4 from Amborella trichopoda.